The chain runs to 208 residues: MYSNHNLNSDDCCFDWNEEKAAELQRTGVSFDRSLTPQSLRTSTRRLSEENKQQSGTMHIDTSPSVVSDIISSRRDRSQDFFGPHSSSPIAPSERQRADQRSRLESMRLTRRRDKMTKVRGGLEKMEEMIMQGEHLREMQRLKQEAQKNALPSDMAEYMEWQNNEDLEDDELLAFIEKQETYKNELEHFLNNANKNVYENNSYPNSHT.

The disordered stretch occupies residues 28 to 105 (GVSFDRSLTP…QRADQRSRLE (78 aa)). Positions 33 to 42 (RSLTPQSLRT) are enriched in polar residues. A compositionally biased stretch (low complexity) spans 60–71 (IDTSPSVVSDII). A compositionally biased stretch (basic and acidic residues) spans 94–105 (ERQRADQRSRLE).

The protein resides in the cytoplasm. It is found in the nucleus. Its function is as follows. Involved in regulation of Ty1 transposition. Inhibits Ty1 transposition at a post-transcriptional and pre-integrational stage of the Ty1 retrotransposition cycle. The sequence is that of Regulator of Ty1 transposition protein 105 (RTT105) from Saccharomyces cerevisiae (strain YJM789) (Baker's yeast).